The chain runs to 176 residues: Large ribosomal subunit protein uL10 (176 aa).

It belongs to the universal ribosomal protein uL10 family. As to quaternary structure, part of the ribosomal stalk of the 50S ribosomal subunit. The N-terminus interacts with L11 and the large rRNA to form the base of the stalk. The C-terminus forms an elongated spine to which L12 dimers bind in a sequential fashion forming a multimeric L10(L12)X complex.

Functionally, forms part of the ribosomal stalk, playing a central role in the interaction of the ribosome with GTP-bound translation factors. In Leuconostoc citreum (strain KM20), this protein is Large ribosomal subunit protein uL10.